A 160-amino-acid chain; its full sequence is MARPVHPEFDKKKVVAENRRARFEYFIEETYEAGICLTGTEVKSLRFGEGSIAESYAEVKNGEVWLVNSNVPEFSHGNRFNHVPKRPRKLLLKERQIAKFTGAVERKGMTLVPLSIYFNSRGRAKVELALAKGKNAADKRTTIKERDWKREKARIMKDHG.

This sequence belongs to the SmpB family.

It is found in the cytoplasm. Functionally, required for rescue of stalled ribosomes mediated by trans-translation. Binds to transfer-messenger RNA (tmRNA), required for stable association of tmRNA with ribosomes. tmRNA and SmpB together mimic tRNA shape, replacing the anticodon stem-loop with SmpB. tmRNA is encoded by the ssrA gene; the 2 termini fold to resemble tRNA(Ala) and it encodes a 'tag peptide', a short internal open reading frame. During trans-translation Ala-aminoacylated tmRNA acts like a tRNA, entering the A-site of stalled ribosomes, displacing the stalled mRNA. The ribosome then switches to translate the ORF on the tmRNA; the nascent peptide is terminated with the 'tag peptide' encoded by the tmRNA and targeted for degradation. The ribosome is freed to recommence translation, which seems to be the essential function of trans-translation. This chain is SsrA-binding protein, found in Novosphingobium aromaticivorans (strain ATCC 700278 / DSM 12444 / CCUG 56034 / CIP 105152 / NBRC 16084 / F199).